The chain runs to 1755 residues: Transposon Ty1-BL Gag-Pol polyprotein (1755 aa).

Polar residues-rich tracts occupy residues 20-31 (SVTSKEVQTTQD), 46-55 (VSTQANSQQP), and 137-168 (VGTHLNTPSPESGNSFPDSSSAKSNMTSTNQH). Disordered stretches follow at residues 20–84 (SVTS…QNGP), 137–173 (VGTHLNTPSPESGNSFPDSSSAKSNMTSTNQHVRPPP), and 350–420 (QQES…IRGS). The segment at 299 to 401 (NNGIPINNKV…NSQSRTARAH (103 aa)) is RNA-binding. A compositionally biased stretch (basic and acidic residues) spans 363–372 (SPSDEKKDSR). Polar residues predominate over residues 373-411 (TYTNTTKPKSITRNSQKPNNSQSRTARAHNVSTFNNSPG). The active-site For protease activity; shared with dimeric partner is Asp-461. An integrase-type zinc finger-like region spans residues 583–640 (NVHTSESTRKYPYPFIHRMLAHANAQTIRYSLKNNTITYFNESDVDWSSAIDYQCPDC). Residues 660-835 (NSYEPFQYLH…AGLDISTLLP (176 aa)) enclose the Integrase catalytic domain. Positions 671 and 736 each coordinate Mg(2+). Residues 956-1172 (SKAVSPTDST…LGGIGDSNAY (217 aa)) form a disordered region. The segment covering 960–969 (SPTDSTPPST) has biased composition (low complexity). Polar residues-rich tracts occupy residues 1005–1017 (STPQISDIESTDS) and 1031–1043 (MSQSNTHESSYAS). Over residues 1044-1053 (KSKDFRHSDS) the composition is skewed to basic and acidic residues. 2 stretches are compositionally biased toward polar residues: residues 1054-1082 (YSDNETNHTNVPISSTGGTNNKTVPQTSE) and 1095-1106 (SIDTSSSESNSL). The short motif at 1178–1212 (KKRSLEDNETEIKVSRDTWNTKNMRSLEPPRSKKR) is the Bipartite nuclear localization signal element. One can recognise a Reverse transcriptase Ty1/copia-type domain in the interval 1338 to 1476 (NNYHITQLDI…DILGLEIKYQ (139 aa)). The Mg(2+) site is built by Asp-1346, Asp-1427, Asp-1428, Asp-1610, Glu-1652, and Asp-1685. The 143-residue stretch at 1610–1752 (DASYGNQPYY…IKTFKLLTNK (143 aa)) folds into the RNase H Ty1/copia-type domain.

As to quaternary structure, the capsid protein forms a homotrimer, from which the VLPs are assembled. The protease is a homodimer, whose active site consists of two apposed aspartic acid residues. Initially, virus-like particles (VLPs) are composed of the structural unprocessed proteins Gag and Gag-Pol, and also contain the host initiator methionine tRNA (tRNA(i)-Met) which serves as a primer for minus-strand DNA synthesis, and a dimer of genomic Ty RNA. Processing of the polyproteins occurs within the particle and proceeds by an ordered pathway, called maturation. First, the protease (PR) is released by autocatalytic cleavage of the Gag-Pol polyprotein yielding capsid protein p45 and a Pol-p154 precursor protein. This cleavage is a prerequisite for subsequent processing of Pol-p154 at the remaining sites to release the mature structural and catalytic proteins. Maturation takes place prior to the RT reaction and is required to produce transposition-competent VLPs.

It localises to the cytoplasm. It is found in the nucleus. The catalysed reaction is DNA(n) + a 2'-deoxyribonucleoside 5'-triphosphate = DNA(n+1) + diphosphate. It catalyses the reaction Endonucleolytic cleavage to 5'-phosphomonoester.. Capsid protein (CA) is the structural component of the virus-like particle (VLP), forming the shell that encapsulates the retrotransposons dimeric RNA genome. The particles are assembled from trimer-clustered units and there are holes in the capsid shells that allow for the diffusion of macromolecules. CA also has nucleocapsid-like chaperone activity, promoting primer tRNA(i)-Met annealing to the multipartite primer-binding site (PBS), dimerization of Ty1 RNA and initiation of reverse transcription. Its function is as follows. The aspartyl protease (PR) mediates the proteolytic cleavages of the Gag and Gag-Pol polyproteins after assembly of the VLP. In terms of biological role, reverse transcriptase/ribonuclease H (RT) is a multifunctional enzyme that catalyzes the conversion of the retro-elements RNA genome into dsDNA within the VLP. The enzyme displays a DNA polymerase activity that can copy either DNA or RNA templates, and a ribonuclease H (RNase H) activity that cleaves the RNA strand of RNA-DNA heteroduplexes during plus-strand synthesis and hydrolyzes RNA primers. The conversion leads to a linear dsDNA copy of the retrotransposon that includes long terminal repeats (LTRs) at both ends. Functionally, integrase (IN) targets the VLP to the nucleus, where a subparticle preintegration complex (PIC) containing at least integrase and the newly synthesized dsDNA copy of the retrotransposon must transit the nuclear membrane. Once in the nucleus, integrase performs the integration of the dsDNA into the host genome. The protein is Transposon Ty1-BL Gag-Pol polyprotein (TY1B-BL) of Saccharomyces cerevisiae (strain ATCC 204508 / S288c) (Baker's yeast).